Consider the following 346-residue polypeptide: tRNA N6-adenosine threonylcarbamoyltransferase (346 aa).

Fe cation contacts are provided by His-111 and His-115. Substrate-binding positions include 134-138 (LVSGG), Asp-167, Gly-180, and Asn-279. Asp-307 contributes to the Fe cation binding site.

The protein belongs to the KAE1 / TsaD family. The cofactor is Fe(2+).

The protein localises to the cytoplasm. It catalyses the reaction L-threonylcarbamoyladenylate + adenosine(37) in tRNA = N(6)-L-threonylcarbamoyladenosine(37) in tRNA + AMP + H(+). In terms of biological role, required for the formation of a threonylcarbamoyl group on adenosine at position 37 (t(6)A37) in tRNAs that read codons beginning with adenine. Is involved in the transfer of the threonylcarbamoyl moiety of threonylcarbamoyl-AMP (TC-AMP) to the N6 group of A37, together with TsaE and TsaB. TsaD likely plays a direct catalytic role in this reaction. The protein is tRNA N6-adenosine threonylcarbamoyltransferase of Burkholderia vietnamiensis (strain G4 / LMG 22486) (Burkholderia cepacia (strain R1808)).